Consider the following 376-residue polypeptide: Actin (376 aa).

Belongs to the actin family.

The protein localises to the cytoplasm. It localises to the cytoskeleton. It catalyses the reaction ATP + H2O = ADP + phosphate + H(+). Functionally, actins are highly conserved proteins that are involved in various types of cell motility and are ubiquitously expressed in all eukaryotic cells. The protein is Actin of Trypanosoma cruzi.